The chain runs to 444 residues: tRNA-2-methylthio-N(6)-dimethylallyladenosine synthase (444 aa).

The 115-residue stretch at 3 to 117 (RGLYIESYGC…LPELIMKVKR (115 aa)) folds into the MTTase N-terminal domain. Cys-12, Cys-48, Cys-80, Cys-155, Cys-159, and Cys-162 together coordinate [4Fe-4S] cluster. Residues 141 to 374 (ANGGVSAYVS…LLTKQQLQFN (234 aa)) enclose the Radical SAM core domain. Residues 375-441 (KSMEGRVMDV…QNSLEGTVLS (67 aa)) enclose the TRAM domain.

It belongs to the methylthiotransferase family. MiaB subfamily. Monomer. [4Fe-4S] cluster serves as cofactor.

The protein resides in the cytoplasm. The enzyme catalyses N(6)-dimethylallyladenosine(37) in tRNA + (sulfur carrier)-SH + AH2 + 2 S-adenosyl-L-methionine = 2-methylsulfanyl-N(6)-dimethylallyladenosine(37) in tRNA + (sulfur carrier)-H + 5'-deoxyadenosine + L-methionine + A + S-adenosyl-L-homocysteine + 2 H(+). Its function is as follows. Catalyzes the methylthiolation of N6-(dimethylallyl)adenosine (i(6)A), leading to the formation of 2-methylthio-N6-(dimethylallyl)adenosine (ms(2)i(6)A) at position 37 in tRNAs that read codons beginning with uridine. The protein is tRNA-2-methylthio-N(6)-dimethylallyladenosine synthase of Anaplasma phagocytophilum (strain HZ).